The primary structure comprises 688 residues: G protein-coupled receptor kinase 3 (688 aa).

Residues 1–190 form an N-terminal region; sequence MADLEAVLAD…ELNIHLTMND (190 aa). In terms of domain architecture, RGS spans 54-175; it reads TFDKIFNQRI…MESDKFTRFC (122 aa). The region spanning 191–453 is the Protein kinase domain; that stretch reads FSVHRIIGRG…AQELKTHDFF (263 aa). Residues 197-205 and Lys-220 each bind ATP; that span reads IGRGGFGEV. Asp-317 (proton acceptor) is an active-site residue. The AGC-kinase C-terminal domain occupies 454–521; sequence RGIDWQHVYL…VISERWQQEV (68 aa). The PH domain maps to 558-652; it reads DCIVHGYMLK…WKKELTETFM (95 aa).

It belongs to the protein kinase superfamily. AGC Ser/Thr protein kinase family. GPRK subfamily. Interacts with GIT1. In terms of processing, ubiquitinated. As to expression, ubiquitous; brain, spleen &gt; heart, lung &gt; kidney.

The protein localises to the postsynapse. The protein resides in the presynapse. The catalysed reaction is [beta-adrenergic receptor] + ATP = [beta-adrenergic receptor]-phosphate + ADP + H(+). In terms of biological role, specifically phosphorylates the agonist-occupied form of the beta-adrenergic and closely related receptors. The chain is G protein-coupled receptor kinase 3 from Bos taurus (Bovine).